The primary structure comprises 215 residues: Thiamine-phosphate synthase 1 (215 aa).

Residues 35–39 (QYRFE) and N67 contribute to the 4-amino-2-methyl-5-(diphosphooxymethyl)pyrimidine site. Residues D68 and D87 each contribute to the Mg(2+) site. T106 is a 4-amino-2-methyl-5-(diphosphooxymethyl)pyrimidine binding site. 132-134 (TST) contacts 2-[(2R,5Z)-2-carboxy-4-methylthiazol-5(2H)-ylidene]ethyl phosphate. K135 is a binding site for 4-amino-2-methyl-5-(diphosphooxymethyl)pyrimidine. A 2-[(2R,5Z)-2-carboxy-4-methylthiazol-5(2H)-ylidene]ethyl phosphate-binding site is contributed by G162.

The protein belongs to the thiamine-phosphate synthase family. Mg(2+) serves as cofactor.

The catalysed reaction is 2-[(2R,5Z)-2-carboxy-4-methylthiazol-5(2H)-ylidene]ethyl phosphate + 4-amino-2-methyl-5-(diphosphooxymethyl)pyrimidine + 2 H(+) = thiamine phosphate + CO2 + diphosphate. The enzyme catalyses 2-(2-carboxy-4-methylthiazol-5-yl)ethyl phosphate + 4-amino-2-methyl-5-(diphosphooxymethyl)pyrimidine + 2 H(+) = thiamine phosphate + CO2 + diphosphate. It catalyses the reaction 4-methyl-5-(2-phosphooxyethyl)-thiazole + 4-amino-2-methyl-5-(diphosphooxymethyl)pyrimidine + H(+) = thiamine phosphate + diphosphate. The protein operates within cofactor biosynthesis; thiamine diphosphate biosynthesis; thiamine phosphate from 4-amino-2-methyl-5-diphosphomethylpyrimidine and 4-methyl-5-(2-phosphoethyl)-thiazole: step 1/1. Its function is as follows. Condenses 4-methyl-5-(beta-hydroxyethyl)thiazole monophosphate (THZ-P) and 2-methyl-4-amino-5-hydroxymethyl pyrimidine pyrophosphate (HMP-PP) to form thiamine monophosphate (TMP). In Aquifex aeolicus (strain VF5), this protein is Thiamine-phosphate synthase 1.